The chain runs to 64 residues: Ferredoxin-like protein in nif region (64 aa).

The 29-residue stretch at 2–30 (AFKIIASQCTQCGACEFECPSNAIELKGE) folds into the 4Fe-4S ferredoxin-type domain. Residues Cys-10, Cys-13, Cys-16, Cys-20, Cys-39, Cys-42, Cys-51, and Cys-55 each coordinate [4Fe-4S] cluster.

Requires [4Fe-4S] cluster as cofactor.

The protein is Ferredoxin-like protein in nif region (fdxN) of Sinorhizobium fredii (strain NBRC 101917 / NGR234).